Consider the following 1191-residue polypeptide: Pyruvate-flavodoxin oxidoreductase (1191 aa).

2 4Fe-4S ferredoxin-type domains span residues 687 to 716 and 744 to 773; these read QVCS…VKAV and YVLA…TGAR. [4Fe-4S] cluster-binding residues include C696, C699, C702, C706, C753, C756, C759, C763, C825, C828, C853, and C1085.

Belongs to the pyruvate:ferredoxin/flavodoxin oxidoreductase family. [4Fe-4S] cluster is required as a cofactor.

It carries out the reaction oxidized [flavodoxin] + pyruvate + CoA + 2 H(+) = reduced [flavodoxin] + acetyl-CoA + CO2. In terms of biological role, oxidoreductase required for the transfer of electrons from pyruvate to flavodoxin, which reduces nitrogenase. The chain is Pyruvate-flavodoxin oxidoreductase (nifJ) from Rhodospirillum rubrum (strain ATCC 11170 / ATH 1.1.1 / DSM 467 / LMG 4362 / NCIMB 8255 / S1).